The sequence spans 468 residues: UDP-N-acetylmuramate--L-alanine ligase (468 aa).

Residue glycine 116 to threonine 122 coordinates ATP.

The protein belongs to the MurCDEF family.

Its subcellular location is the cytoplasm. The catalysed reaction is UDP-N-acetyl-alpha-D-muramate + L-alanine + ATP = UDP-N-acetyl-alpha-D-muramoyl-L-alanine + ADP + phosphate + H(+). The protein operates within cell wall biogenesis; peptidoglycan biosynthesis. Its function is as follows. Cell wall formation. This chain is UDP-N-acetylmuramate--L-alanine ligase, found in Fusobacterium nucleatum subsp. nucleatum (strain ATCC 25586 / DSM 15643 / BCRC 10681 / CIP 101130 / JCM 8532 / KCTC 2640 / LMG 13131 / VPI 4355).